A 534-amino-acid chain; its full sequence is Cytidylyl-2-hydroxyethylphosphonate methyltransferase (534 aa).

The B12-binding domain occupies 38–195 (KVLLLNPSAT…EHLNGNVSDD (158 aa)). Positions 268-496 (TVGSRVGQLY…TYKQGIINVP (229 aa)) constitute a Radical SAM core domain. [4Fe-4S] cluster is bound by residues cysteine 282, cysteine 286, and cysteine 289.

It belongs to the radical SAM superfamily. [4Fe-4S] cluster serves as cofactor. Methylcob(III)alamin is required as a cofactor.

The enzyme catalyses cytidine 5'-{[hydroxy(2-hydroxyethyl)phosphonoyl]phosphate} + AH2 + 2 S-adenosyl-L-methionine = cytidine 5'-({hydroxy[(S)-2-hydroxypropyl]phosphonoyl}phosphate) + 5'-deoxyadenosine + L-methionine + A + S-adenosyl-L-homocysteine + 2 H(+). The protein operates within antibiotic biosynthesis; fosfomycin biosynthesis. In terms of biological role, involved in fosfomycin biosynthesis. Catalyzes the C-methylation of cytidylyl-2-hydroxyethylphosphonate (HEP-CMP) to form cytidylyl-2-hydroxypropylphosphonate (HPP-CMP). The C-methylation is not stereoselective and the ratio of (S)- to (R)-HPP-CMP is almost equal in vitro. The sequence is that of Cytidylyl-2-hydroxyethylphosphonate methyltransferase from Streptomyces wedmorensis.